The sequence spans 308 residues: tRNA dimethylallyltransferase (308 aa).

10-17 (GPTASGKT) contributes to the ATP binding site. 12-17 (TASGKT) serves as a coordination point for substrate. 2 interaction with substrate tRNA regions span residues 35–38 (DSSL) and 159–163 (QRIFR).

Belongs to the IPP transferase family. As to quaternary structure, monomer. Mg(2+) is required as a cofactor.

It carries out the reaction adenosine(37) in tRNA + dimethylallyl diphosphate = N(6)-dimethylallyladenosine(37) in tRNA + diphosphate. Its function is as follows. Catalyzes the transfer of a dimethylallyl group onto the adenine at position 37 in tRNAs that read codons beginning with uridine, leading to the formation of N6-(dimethylallyl)adenosine (i(6)A). The polypeptide is tRNA dimethylallyltransferase (Francisella philomiragia subsp. philomiragia (strain ATCC 25017 / CCUG 19701 / FSC 153 / O#319-036)).